A 391-amino-acid polypeptide reads, in one-letter code: Homocysteine-responsive endoplasmic reticulum-resident ubiquitin-like domain member 1 protein (391 aa).

At methionine 1 the chain carries N-acetylmethionine. Topologically, residues 1–263 are cytoplasmic; sequence MESETEPEPV…VEEDDEINRD (263 aa). Residues 10–72 enclose the Ubiquitin-like domain; the sequence is VTLLVKSPNQ…LLDHQCLRDL (63 aa). Residues 100–126 form a disordered region; sequence KVAESTEEPAGSNRGQYPEDSSSDGLR. The segment covering 112–124 has biased composition (polar residues); that stretch reads NRGQYPEDSSSDG. The interaction with UBQLN1 stretch occupies residues 115–200; it reads QYPEDSSSDG…ASGAFVPPPS (86 aa). At serine 135 the chain carries Phosphoserine. Residues 264–284 form a helical membrane-spanning segment; the sequence is WLDWTYSAATFSVFLSILYFY. The Lumenal portion of the chain corresponds to 285 to 289; the sequence is SSLSR. A helical membrane pass occupies residues 290–310; sequence FLMVMGATVVMYLHHVGWFPF. Over 311-391 the chain is Cytoplasmic; it reads RPRPVQNFPN…LPEGPPAIAN (81 aa). Residues 318–359 form a disordered region; the sequence is FPNDGPPPDIVNQDPNNNLQEGTDPETEDPNHVPPDRGVLDG. Residues 346-357 are compositionally biased toward basic and acidic residues; the sequence is DPNHVPPDRGVL.

In terms of assembly, interacts with PSEN1 and PSEN2. Interacts with UBXN6. Interacts with UBQLN1, UBQLN2 and UBQLN4. Component of the HRD1 complex, which comprises at least SYNV1/HRD1, FAM8A1, HERPUD1/HERP, OS9, SEL1L and UBE2J1. FAM8A1 binding to SYNV1 may promote recruitment of HERPUD1 to the HRD1 complex.

It is found in the endoplasmic reticulum membrane. Functionally, component of the endoplasmic reticulum quality control (ERQC) system also called ER-associated degradation (ERAD) involved in ubiquitin-dependent degradation of misfolded endoplasmic reticulum proteins. Binds to ubiquilins and this interaction is required for efficient degradation of CD3D via the ERAD pathway. The sequence is that of Homocysteine-responsive endoplasmic reticulum-resident ubiquitin-like domain member 1 protein (HERPUD1) from Pongo abelii (Sumatran orangutan).